Here is a 481-residue protein sequence, read N- to C-terminus: Trigger factor (481 aa).

The PPIase FKBP-type domain maps to 174-261; the sequence is GDIAVVSFKG…LKDLKEKELP (88 aa). The interval 435 to 481 is disordered; sequence VKEKTTKASQASKTTKAKKTTTKTTKATKTATKTTKATKTQNKKEKK. A compositionally biased stretch (low complexity) spans 456–474; that stretch reads TKTTKATKTATKTTKATKT.

This sequence belongs to the FKBP-type PPIase family. Tig subfamily.

It is found in the cytoplasm. It catalyses the reaction [protein]-peptidylproline (omega=180) = [protein]-peptidylproline (omega=0). Functionally, involved in protein export. Acts as a chaperone by maintaining the newly synthesized protein in an open conformation. Functions as a peptidyl-prolyl cis-trans isomerase. The sequence is that of Trigger factor from Prochlorococcus marinus (strain MIT 9312).